Reading from the N-terminus, the 425-residue chain is MLDQRLLRDNPELISQQLGRRGMEVDLTKLQLIAKQERDLEEQRSNLQAEGNRTGKEVGMLIKGGAAPDSDEVKALREKGNRIKQQVAVLEEEEKGLEAKLREQLLALPNLPSADAPEGKSEADNVEVKRWGEPRQGKDLEEHWQLADRLGLFETERSVRIAQSRFITLMGDGARLERALISFMLDLHSTKGYTEVMPPILVNSASLTGSGQLPKFAEESFRCADDDLWLTPTAEVPLTSLHRDEVIAVEQLPLKYAAYTPCFRREAGSYGRDTRGLIRLHQFNKVELYWFCHPEKSAEAHEQLTLDAEAVLEALELPYRRLELCTGDMGFSAARTYDLEVWLPGAGSYREISSCSTCGDFQARRSAIRFKEGKGTQLLHTLNGSGLAIGRTMAALLENGQQPDGSIQLPAALVPYFGRERLTPQ.

The interval Asn-110 to Pro-134 is disordered. The segment covering Pro-117 to Pro-134 has biased composition (basic and acidic residues). Thr-233–Glu-235 is an L-serine binding site. Arg-264–Glu-266 is a binding site for ATP. Residue Glu-287 coordinates L-serine. Glu-351–Ser-354 contacts ATP. L-serine is bound at residue Ser-385.

It belongs to the class-II aminoacyl-tRNA synthetase family. Type-1 seryl-tRNA synthetase subfamily. As to quaternary structure, homodimer. The tRNA molecule binds across the dimer.

The protein localises to the cytoplasm. It catalyses the reaction tRNA(Ser) + L-serine + ATP = L-seryl-tRNA(Ser) + AMP + diphosphate + H(+). The catalysed reaction is tRNA(Sec) + L-serine + ATP = L-seryl-tRNA(Sec) + AMP + diphosphate + H(+). It functions in the pathway aminoacyl-tRNA biosynthesis; selenocysteinyl-tRNA(Sec) biosynthesis; L-seryl-tRNA(Sec) from L-serine and tRNA(Sec): step 1/1. Its function is as follows. Catalyzes the attachment of serine to tRNA(Ser). Is also able to aminoacylate tRNA(Sec) with serine, to form the misacylated tRNA L-seryl-tRNA(Sec), which will be further converted into selenocysteinyl-tRNA(Sec). In Synechococcus sp. (strain RCC307), this protein is Serine--tRNA ligase.